Consider the following 391-residue polypeptide: uncharacterized protein (391 aa).

The helical transmembrane segment at 4 to 24 (FALIVGIVALAIFSFLYIQLY) threads the bilayer.

The protein resides in the membrane. This is an uncharacterized protein from Haemophilus influenzae (strain ATCC 51907 / DSM 11121 / KW20 / Rd).